Consider the following 557-residue polypeptide: Pectinesterase/pectinesterase inhibitor 18 (557 aa).

Positions 1 to 34 (MSNSNQPLLSKPKSLKHKNLCLVLSFVAILGSVA) are cleaved as a signal peptide. A pectinesterase inhibitor 18 region spans residues 47–203 (NNDDSLLTTS…VSRARVALAI (157 aa)). The segment at 246–543 (NVVVAKDGTG…FTVAKLIQGG (298 aa)) is pectinesterase 18. The substrate site is built by threonine 321 and glutamine 351. Aspartate 374 serves as the catalytic Proton donor; for pectinesterase activity. Aspartate 395 (nucleophile; for pectinesterase activity) is an active-site residue. Residues arginine 463 and tryptophan 465 each coordinate substrate.

In the N-terminal section; belongs to the PMEI family. This sequence in the C-terminal section; belongs to the pectinesterase family. In terms of tissue distribution, expressed in siliques, flowers, floral stems, rosette leaves and roots.

The protein localises to the secreted. The protein resides in the cell wall. It catalyses the reaction [(1-&gt;4)-alpha-D-galacturonosyl methyl ester](n) + n H2O = [(1-&gt;4)-alpha-D-galacturonosyl](n) + n methanol + n H(+). The enzyme catalyses Endohydrolysis of the N-glycosidic bond at one specific adenosine on the 28S rRNA.. Its pathway is glycan metabolism; pectin degradation; 2-dehydro-3-deoxy-D-gluconate from pectin: step 1/5. Functionally, acts in the modification of cell walls via demethylesterification of cell wall pectin. Inhibits the elongation phase of protein synthesis. In Arabidopsis thaliana (Mouse-ear cress), this protein is Pectinesterase/pectinesterase inhibitor 18 (PME18).